Here is a 248-residue protein sequence, read N- to C-terminus: Probable transcriptional regulatory protein NGR_c27950 (248 aa).

This sequence belongs to the TACO1 family.

It localises to the cytoplasm. This is Probable transcriptional regulatory protein NGR_c27950 from Sinorhizobium fredii (strain NBRC 101917 / NGR234).